The following is a 249-amino-acid chain: Homeobox protein TGIF2LX (249 aa).

Positions 1 to 27 (MEAAADRPAETRSRVEKDSRRAKKDSP) are enriched in basic and acidic residues. Disordered regions lie at residues 1 to 60 (MEAA…KKKR) and 121 to 215 (QRRG…EPVS). Positions 28-46 (AKTQSPAQDTSIMLRSNAD) are enriched in polar residues. A DNA-binding region (homeobox; TALE-type) is located at residues 55 to 118 (EHKKKRKGYL…INARRRILPD (64 aa)). The span at 159–172 (DNVQSLPLRSSPKG) shows a compositional bias: polar residues. Positions 202–215 (VSNITSSSSPEPVS) are enriched in low complexity.

This sequence belongs to the TALE/TGIF homeobox family.

The protein localises to the nucleus. Its function is as follows. May have a transcription role in testis. This chain is Homeobox protein TGIF2LX (TGIF2LX), found in Miopithecus talapoin (Angolan talapoin).